A 205-amino-acid chain; its full sequence is Methylthioribulose-1-phosphate dehydratase (205 aa).

Zn(2+) contacts are provided by H94 and H96.

The protein belongs to the aldolase class II family. MtnB subfamily. Requires Zn(2+) as cofactor.

The catalysed reaction is 5-(methylsulfanyl)-D-ribulose 1-phosphate = 5-methylsulfanyl-2,3-dioxopentyl phosphate + H2O. It participates in amino-acid biosynthesis; L-methionine biosynthesis via salvage pathway; L-methionine from S-methyl-5-thio-alpha-D-ribose 1-phosphate: step 2/6. Catalyzes the dehydration of methylthioribulose-1-phosphate (MTRu-1-P) into 2,3-diketo-5-methylthiopentyl-1-phosphate (DK-MTP-1-P). This is Methylthioribulose-1-phosphate dehydratase from Pectobacterium carotovorum subsp. carotovorum (strain PC1).